The primary structure comprises 357 residues: CCN family member 3 (357 aa).

The N-terminal stretch at 1–31 is a signal peptide; sequence MQSVQSTSFCLRKQCLCLTFLLLHLLGQVAA. In terms of domain architecture, IGFBP N-terminal spans 32–105; that stretch reads TQRCPPQCPG…SNQTGICTAV (74 aa). 6 cysteine pairs are disulfide-bonded: C35–C61, C39–C63, C43–C64, C50–C67, C75–C89, and C81–C102. N97 carries N-linked (GlcNAc...) asparagine glycosylation. Residues 108 to 174 enclose the VWFC domain; sequence DNCVFDGVIY…GECCEKWICG (67 aa). Residues 205 to 250 form the TSP type-1 domain; sequence NCIEQTTEWTACSKSCGMGFSTRVTNRNRQCEMLKQTRLCMVRPCE. Residue C244 is the site of S-palmitoyl cysteine attachment. 5 cysteine pairs are disulfide-bonded: C264/C301, C281/C315, C292/C331, C295/C333, and C300/C337. The 75-residue stretch at 264–338 folds into the CTCK domain; that stretch reads CLRTKKSLKA…GTCTCHTNCP (75 aa). N280 carries an N-linked (GlcNAc...) asparagine glycan.

This sequence belongs to the CCN family. Interacts with FBLN1. Interacts (via CTCK domain) with NOTCH1 (via the EGF-like repeat region). Interacts with GJA1/CX43. Interacts with ITGA5:ITGB1, ITGAV:ITGB3 and ITGAV:ITGB5. Interacts with ZDHHC22; the interaction may lead to CCN3 palmitoylation. In terms of processing, may be palmitoylated on Cys-244, which is important for extracellular secretion. As to expression, expressed in endothelial cells (at protein level). Expressed in bone marrow and thymic cells.

It is found in the secreted. Its subcellular location is the cytoplasm. It localises to the cell junction. The protein resides in the gap junction. Its function is as follows. Immediate-early protein playing a role in various cellular processes including proliferation, adhesion, migration, differentiation and survival. Acts by binding to integrins or membrane receptors such as NOTCH1. Essential regulator of hematopoietic stem and progenitor cell function. Inhibits myogenic differentiation through the activation of Notch-signaling pathway. Inhibits vascular smooth muscle cells proliferation by increasing expression of cell-cycle regulators such as CDKN2B or CDKN1A independently of TGFB1 signaling. Ligand of integrins ITGAV:ITGB3 and ITGA5:ITGB1, acts directly upon endothelial cells to stimulate pro-angiogenic activities and induces angiogenesis. In endothelial cells, supports cell adhesion, induces directed cell migration (chemotaxis) and promotes cell survival. Also plays a role in cutaneous wound healing acting as integrin receptor ligand. Supports skin fibroblast adhesion through ITGA5:ITGB1 and ITGA6:ITGB1 and induces fibroblast chemotaxis through ITGAV:ITGB5. Seems to enhance bFGF-induced DNA synthesis in fibroblasts. Involved in bone regeneration as a negative regulator. Enhances the articular chondrocytic phenotype, whereas it repressed the one representing endochondral ossification. Impairs pancreatic beta-cell function, inhibits beta-cell proliferation and insulin secretion. Plays a role as negative regulator of endothelial pro-inflammatory activation reducing monocyte adhesion, its anti-inflammatory effects occur secondary to the inhibition of NF-kappaB signaling pathway. Contributes to the control and coordination of inflammatory processes in atherosclerosis. Attenuates inflammatory pain through regulation of IL1B- and TNF-induced MMP9, MMP2 and CCL2 expression. Inhibits MMP9 expression through ITGB1 engagement. Brain osteoanabolic hormone. Drives osteogenesis in osteochondral skeletal stem cells. During lactation, maintains the maternal skeleton and viability of offspring. This Homo sapiens (Human) protein is CCN family member 3.